A 158-amino-acid polypeptide reads, in one-letter code: Endoribonuclease YbeY (158 aa).

Residues His-119, His-123, and His-129 each coordinate Zn(2+).

Belongs to the endoribonuclease YbeY family. Zn(2+) serves as cofactor.

It is found in the cytoplasm. Functionally, single strand-specific metallo-endoribonuclease involved in late-stage 70S ribosome quality control and in maturation of the 3' terminus of the 16S rRNA. In Acinetobacter baumannii (strain AB307-0294), this protein is Endoribonuclease YbeY.